A 565-amino-acid polypeptide reads, in one-letter code: Carboxylesterase 1D (565 aa).

The signal sequence occupies residues 1–18; the sequence is MRLYPLVWLFLAACTAWG. N79 is a glycosylation site (N-linked (GlcNAc...) asparagine). A disulfide bond links C87 and C116. The active-site Acyl-ester intermediate is S221. A disulfide bridge links C273 with C284. The active-site Charge relay system is E353. K382 carries the N6-succinyllysine modification. Residue H466 is the Charge relay system of the active site. N489 carries N-linked (GlcNAc...) asparagine glycosylation. The short motif at 562 to 565 is the Prevents secretion from ER element; the sequence is HVEL.

Belongs to the type-B carboxylesterase/lipase family. As to quaternary structure, homotrimer. As to expression, detected in liver, lung and testis, but not in kidney (at protein level).

It localises to the endoplasmic reticulum lumen. The protein localises to the cytoplasm. Its subcellular location is the cytosol. The protein resides in the lipid droplet. It is found in the microsome. The catalysed reaction is all-trans-retinyl hexadecanoate + H2O = all-trans-retinol + hexadecanoate + H(+). It carries out the reaction a carboxylic ester + H2O = an alcohol + a carboxylate + H(+). It catalyses the reaction a long-chain fatty acyl ethyl ester + H2O = a long-chain fatty acid + ethanol + H(+). Its activity is regulated as follows. FAEE-synthesizing and PNPB-hydrolyzing activities are both inhibited by DFP. Its function is as follows. Major lipase in white adipose tissue. Involved in the metabolism of xenobiotics and of natural substrates. Hydrolyzes triacylglycerols and monoacylglycerols, with a preference for monoacylglycerols. The susceptibility of the substrate increases with decreasing acyl chain length of the fatty acid moiety. Catalyzes the synthesis of fatty acid ethyl esters. Hydrolyzes retinyl esters. The protein is Carboxylesterase 1D of Rattus norvegicus (Rat).